Reading from the N-terminus, the 327-residue chain is Homeotic protein distal-less (327 aa).

A DNA-binding region (homeobox) is located at residues 124–183 (MRKPRTIYSSLQLQQLNRRFQRTQYLALPERAELAASLGLTQTQVKIWFQNRRSKYKKMM). A disordered region spans residues 181–303 (KMMKAAQGPG…THHHNPPPQM (123 aa)). Over residues 231–249 (LPPGHSPTPSSTPVSELSP) the composition is skewed to low complexity. Residues 266–275 (QKPHWIDHKP) are compositionally biased toward basic and acidic residues. Positions 276–286 (PPQMTPQPPHP) are enriched in pro residues.

As to expression, expressed in the embryo in limb primordia of the head and thoracic segments. Expressed in regions of the larval leg, wing, antennal and haltere disks that form the distal-most regions of the mature structures (in the leg this corresponds to the tarsus and the distal tibia). Found in the optic center of the developing larval brain.

It is found in the nucleus. Its function is as follows. Transcription factor that plays a role in larval and adult appendage development. Specifies the identity of ventral appendages (including legs and antennae) and suppresses dorsal appendage development. Involved in patterning the distal-proximal limb axis. May control the adhesive properties of cells during limb morphogenesis. Also has a secondary role in the normal patterning of the wing margin. The protein is Homeotic protein distal-less (Dll) of Drosophila melanogaster (Fruit fly).